Consider the following 101-residue polypeptide: UPF0751 protein DSY3086 (101 aa).

The protein belongs to the UPF0751 family.

This is UPF0751 protein DSY3086 from Desulfitobacterium hafniense (strain Y51).